Reading from the N-terminus, the 454-residue chain is CBL-interacting protein kinase 33 (454 aa).

The Protein kinase domain occupies 13–268; sequence YELGRTIGEG…IPEILEDEWF (256 aa). Residues 19–27 and Lys42 each bind ATP; that span reads IGEGTFAKV. Asp136 acts as the Proton acceptor in catalysis. Residues 154–183 form an activation loop region; the sequence is DFGLSALSQQIKDDGLLHTTCGTPNYVAPE. In terms of domain architecture, NAF spans 305 to 329; it reads EEPEALNAFELISMSAGLNLGNLFD. Residues 335–364 form a PPI region; it reads KRETRFTSKCPPKEIVRKIEEAAKPLGFDV.

This sequence belongs to the protein kinase superfamily. CAMK Ser/Thr protein kinase family. SNF1 subfamily. Mn(2+) serves as cofactor.

It catalyses the reaction L-seryl-[protein] + ATP = O-phospho-L-seryl-[protein] + ADP + H(+). The enzyme catalyses L-threonyl-[protein] + ATP = O-phospho-L-threonyl-[protein] + ADP + H(+). In terms of biological role, CIPK serine-threonine protein kinases interact with CBL proteins. Binding of a CBL protein to the regulatory NAF domain of CIPK protein lead to the activation of the kinase in a calcium-dependent manner. The chain is CBL-interacting protein kinase 33 (CIPK33) from Oryza sativa subsp. japonica (Rice).